Reading from the N-terminus, the 213-residue chain is AN1-type zinc finger protein 5 (213 aa).

The A20-type zinc finger occupies 8–42; the sequence is TPGPMLCSTGCGFYGNPRTNGMCSVCYKEHLQRQQ. Residues Cys-14, Cys-18, Cys-30, and Cys-33 each contribute to the Zn(2+) site. Residues 39–149 form a disordered region; the sequence is QRQQNSGRMS…EEKAPELPKP (111 aa). Over residues 40 to 66 the composition is skewed to polar residues; that stretch reads RQQNSGRMSPMGTASGSNSPTSDSASV. Ser-48 and Ser-58 each carry phosphoserine. Residues 120 to 138 are compositionally biased toward low complexity; it reads SEPVVTQPSPSVSQPSSSQ. Positions 139–148 are enriched in basic and acidic residues; it reads SEEKAPELPK. The AN1-type zinc-finger motif lies at 148–194; the sequence is KPKKNRCFMCRKKVGLTGFDCRCGNLFCGLHRYSDKHNCPYDYKAEA. Zn(2+)-binding residues include Cys-154, Cys-157, Cys-168, Cys-170, Cys-175, His-178, His-184, and Cys-186. Lys-209 is modified (N6-acetyllysine).

Homooligomer and/or heterooligomer. Interacts (via A20-type domain) with IKBKG and RIPK1 and with TRAF6 (via AN1-type domain). Interacts with ubiquitin and polyubiquitinated proteins. Identified in a heterotrimeric complex with ubiquitin and SQSTM1, where ZFAND5 and SQSTM1 both interact with the same ubiquitin molecule.

It localises to the cytoplasm. Involved in protein degradation via the ubiquitin-proteasome system. May act by anchoring ubiquitinated proteins to the proteasome. Plays a role in ubiquitin-mediated protein degradation during muscle atrophy. Plays a role in the regulation of NF-kappa-B activation and apoptosis. Inhibits NF-kappa-B activation triggered by overexpression of RIPK1 and TRAF6 but not of RELA. Also inhibits tumor necrosis factor (TNF), IL-1 and TLR4-induced NF-kappa-B activation in a dose-dependent manner. Overexpression sensitizes cells to TNF-induced apoptosis. Is a potent inhibitory factor for osteoclast differentiation. The protein is AN1-type zinc finger protein 5 (Zfand5) of Rattus norvegicus (Rat).